The primary structure comprises 468 residues: 6-phospho-beta-galactosidase (468 aa).

Residues Gln-19, His-116, Asn-159, Glu-160, and Asn-297 each contribute to the D-galactose 6-phosphate site. Residue Glu-160 is the Proton donor of the active site. The active-site Nucleophile is the Glu-375. Residues Ser-428, Trp-429, Lys-435, and Tyr-437 each coordinate D-galactose 6-phosphate.

Belongs to the glycosyl hydrolase 1 family.

It catalyses the reaction a 6-phospho-beta-D-galactoside + H2O = D-galactose 6-phosphate + an alcohol. The protein operates within carbohydrate metabolism; lactose degradation; D-galactose 6-phosphate and beta-D-glucose from lactose 6-phosphate: step 1/1. The protein is 6-phospho-beta-galactosidase of Streptococcus pyogenes serotype M1.